Here is a 111-residue protein sequence, read N- to C-terminus: Ig kappa chain V-III region PC 3741/TEPC 111 (111 aa).

The segment at 1-23 (DIVLTQSPASLAVSLGQRATISC) is framework-1. The cysteines at positions 23 and 92 are disulfide-linked. The interval 24 to 38 (RASESVDSYGNSFMH) is complementarity-determining-1. A framework-2 region spans residues 39–53 (WYQQKPGQPPKLLIY). Residues 54-60 (RASNLES) form a complementarity-determining-2 region. Positions 61–92 (GIPARFSGSGSRTDFTLTINPVEADDVATYYC) are framework-3. The segment at 93–101 (QQSNEDPYT) is complementarity-determining-3. The interval 102-111 (FGGGTKLEIK) is framework-4.

The sequence is that of Ig kappa chain V-III region PC 3741/TEPC 111 from Mus musculus (Mouse).